Reading from the N-terminus, the 431-residue chain is Adenylosuccinate synthetase (431 aa).

GTP-binding positions include 12-18 and 40-42; these read GDEGKGK and GHT. The active-site Proton acceptor is the aspartate 13. Aspartate 13 and glycine 40 together coordinate Mg(2+). IMP-binding positions include 13–16, 38–41, threonine 129, arginine 143, glutamine 224, threonine 239, and arginine 303; these read DEGK and NAGH. The active-site Proton donor is histidine 41. 299–305 lines the substrate pocket; that stretch reads TVSNRQR. GTP is bound by residues arginine 305, 331-333, and 413-415; these read KLD and STG.

It belongs to the adenylosuccinate synthetase family. As to quaternary structure, homodimer. It depends on Mg(2+) as a cofactor.

The protein resides in the cytoplasm. The enzyme catalyses IMP + L-aspartate + GTP = N(6)-(1,2-dicarboxyethyl)-AMP + GDP + phosphate + 2 H(+). Its pathway is purine metabolism; AMP biosynthesis via de novo pathway; AMP from IMP: step 1/2. Functionally, plays an important role in the de novo pathway of purine nucleotide biosynthesis. Catalyzes the first committed step in the biosynthesis of AMP from IMP. This Ehrlichia canis (strain Jake) protein is Adenylosuccinate synthetase.